We begin with the raw amino-acid sequence, 574 residues long: Regulatory protein NPR4 (574 aa).

The interval 1-21 (MAATAIEPSSSISFTSSHLSN) is disordered. Positions 9-20 (SSSISFTSSHLS) are enriched in low complexity. Ser11 bears the Phosphoserine mark. The 77-residue stretch at 54-130 (TDAEIIIEEE…IYTGRLKPFP (77 aa)) folds into the BTB domain. A C2HC NPR-type zinc finger spans residues 133-147 (VSTCVDSVCAHDSCK). Cys136, Cys141, His143, and Cys146 together coordinate Zn(2+). ANK repeat units lie at residues 252–280 (ERTG…DITL), 281–311 (DQAN…DVNF), and 315–344 (RGYT…NASD). Positions 373–516 (EPSKYRLCID…MDQYMDEEIP (144 aa)) are salicylic acid-binding core (SBC). Arg419 contributes to the salicylate binding site. The segment at 521–574 (PEKGTVKERRQKRMRYNELKNDVKKAYSKDKVARSCLSSSSPASSLREALENPT) is disordered. The span at 535–553 (RYNELKNDVKKAYSKDKVA) shows a compositional bias: basic and acidic residues. A compositionally biased stretch (low complexity) spans 554–567 (RSCLSSSSPASSLR).

This sequence belongs to the plant 'ANKYRIN-BTB/POZ' family. 'NPR1-like' subfamily. In terms of assembly, forms homodimers, homotetramers and heterodimers with NPR3 in the presence of salicylic acid (SA). Interacts with TGA2, TGA3, TGA5, TGA6 and TGA7. Interacts with CUL3A, a core component of the cullin-RING ubiquitin ligases (CRL). Binds to NPR1; this interaction is disrupted by association with SA, probably due to conformational changes.

It is found in the nucleus. It participates in protein modification; protein ubiquitination. Salicylic acid (SA)-binding substrate-specific adapter of an E3 ubiquitin-protein ligase complex (CUL3-RBX1-BTB) which mediates the ubiquitination and subsequent proteasomal degradation of NPR1 in the absence of SA. Together with NPR3, acts as receptor of salicylic acid to monitor immunity in a NPR1-dependent manner and induce systemic acquired resistance (SAR). Involved in the regulation of basal defense responses against pathogens, and may be implicated in the cross-talk between the SA- and JA-dependent signaling pathways. This is Regulatory protein NPR4 from Arabidopsis thaliana (Mouse-ear cress).